The sequence spans 485 residues: MDIGQTHLGGLISNSQQDEKVRYHIVGSRVRMACNLVKSLYGGSHRSKLIVNGYGQILLSSQPGVIYDNVKVNHPLVKLLQEYVKKMDVIGDGATFFVVLVSELIQEAIDVIGRGMKPACFSSLLREAHKEIDDLGRELLVEHRIDFEDKESISMVLRGVLKDKWLEEIVVEGISLARSFSSESIRVCKVACGSVEDSYVVEGMVFNRLPEGEVKHARQGRTSIYNCPLDISRTELKGTVLMRTASELLSFSKEENKRIKELVESIGADVIICSGKVDKIYLDFLNKGRKLVFRITSKYDLRRIRELLGGHILSTLEPPAEGSMGVVSEVATFREGSTEYTKFISGSKKVYTLVLKNSVQAVLDEHERMVQKALVVLSKNVSGGKIGLVDGAGRFERRLSKAFLERSAGLSGGKSLAYKCIGKALGTFGSSDVEVYDIYNAKIKALKYSMEFVSTLFETSDYLIGRPEALNIGPRNNQHWDEEDH.

It belongs to the TCP-1 chaperonin family. In terms of assembly, component of the T-complex protein 1 (TCP1) complex.

It is found in the cytoplasm. Functionally, molecular chaperone; assists the folding of proteins upon ATP hydrolysis. The chain is T-complex protein 1 subunit theta (CCT8) from Encephalitozoon cuniculi (strain GB-M1) (Microsporidian parasite).